Here is a 205-residue protein sequence, read N- to C-terminus: Dephospho-CoA kinase (205 aa).

The DPCK domain occupies 7–205 (IIGVTGRIAS…QGIINYERFE (199 aa)). 15–20 (ASGKDT) contacts ATP.

This sequence belongs to the CoaE family.

The protein resides in the cytoplasm. The enzyme catalyses 3'-dephospho-CoA + ATP = ADP + CoA + H(+). It participates in cofactor biosynthesis; coenzyme A biosynthesis; CoA from (R)-pantothenate: step 5/5. Its function is as follows. Catalyzes the phosphorylation of the 3'-hydroxyl group of dephosphocoenzyme A to form coenzyme A. This Borreliella burgdorferi (strain ATCC 35210 / DSM 4680 / CIP 102532 / B31) (Borrelia burgdorferi) protein is Dephospho-CoA kinase.